Consider the following 244-residue polypeptide: MDPPAVGEAVKRVIVALDPARRGDVDRLLDMARLVCGVGAGIKVGLPMLALGGSEALAEAARLCKGGGLRVLDLKLADIGYIMRLAAESLSRGFDAAIAHAFVGYEGGLVELKKTLDGLGARLVLVVSMSHPGSREVLDPCLDKLLAVARRVEPWGVVAPATRPEVVARVRETLPTTVILSPGVGAQGGKPGDAICLGGADYEIVGRMVAGSPDPVSALRGVAEYIAARCPEKLLHSSTGNGPS.

Substrate-binding positions include D18, K43, 73-82, S130, 182-192, G206, and R207; these read DLKLADIGYI and PGVGAQGGKPG. The active-site Proton donor is K75.

This sequence belongs to the OMP decarboxylase family. Type 1 subfamily. In terms of assembly, homodimer.

It catalyses the reaction orotidine 5'-phosphate + H(+) = UMP + CO2. It participates in pyrimidine metabolism; UMP biosynthesis via de novo pathway; UMP from orotate: step 2/2. In terms of biological role, catalyzes the decarboxylation of orotidine 5'-monophosphate (OMP) to uridine 5'-monophosphate (UMP). This is Orotidine 5'-phosphate decarboxylase from Aeropyrum pernix (strain ATCC 700893 / DSM 11879 / JCM 9820 / NBRC 100138 / K1).